The sequence spans 124 residues: Phosphoribosyl-AMP cyclohydrolase (124 aa).

Aspartate 82 contributes to the Mg(2+) binding site. Cysteine 83 contributes to the Zn(2+) binding site. Mg(2+)-binding residues include aspartate 84 and aspartate 86. Zn(2+) contacts are provided by cysteine 99 and cysteine 106.

Belongs to the PRA-CH family. As to quaternary structure, homodimer. The cofactor is Mg(2+). Zn(2+) serves as cofactor.

It is found in the cytoplasm. The catalysed reaction is 1-(5-phospho-beta-D-ribosyl)-5'-AMP + H2O = 1-(5-phospho-beta-D-ribosyl)-5-[(5-phospho-beta-D-ribosylamino)methylideneamino]imidazole-4-carboxamide. The protein operates within amino-acid biosynthesis; L-histidine biosynthesis; L-histidine from 5-phospho-alpha-D-ribose 1-diphosphate: step 3/9. In terms of biological role, catalyzes the hydrolysis of the adenine ring of phosphoribosyl-AMP. The polypeptide is Phosphoribosyl-AMP cyclohydrolase (Rhizorhabdus wittichii (strain DSM 6014 / CCUG 31198 / JCM 15750 / NBRC 105917 / EY 4224 / RW1) (Sphingomonas wittichii)).